Reading from the N-terminus, the 524-residue chain is Alkaline phosphatase, tissue-nonspecific isozyme (524 aa).

An N-terminal signal peptide occupies residues 1–17 (MILPFLVLAIGTCLTNS). Asp60 provides a ligand contact to Mg(2+). Zn(2+) is bound by residues Asp60 and Ser110. Residue Ser110 is the Phosphoserine intermediate of the active site. At Ser110 the chain carries Phosphoserine. Cys139 and Cys201 form a disulfide bridge. Asn140 carries an N-linked (GlcNAc...) asparagine glycan. Thr173 contacts Mg(2+). Asn230 carries N-linked (GlcNAc...) asparagine glycosylation. Ca(2+) is bound at residue Glu235. The N-linked (GlcNAc...) asparagine glycan is linked to Asn271. Phe290 and Glu291 together coordinate Ca(2+). N-linked (GlcNAc...) asparagine glycosylation occurs at Asn303. Asp306 provides a ligand contact to Ca(2+). Glu332 contacts Mg(2+). Zn(2+) is bound by residues Asp337, His341, Asp378, and His379. N-linked (GlcNAc...) asparagine glycosylation is present at Asn430. Position 454 (His454) interacts with Zn(2+). Cys489 and Cys497 are oxidised to a cystine. Ser501 carries GPI-anchor amidated serine lipidation. A propeptide spans 502–524 (SASSPSPGALLLPLALFPLRTLF) (removed in mature form).

This sequence belongs to the alkaline phosphatase family. Homodimer. Requires Mg(2+) as cofactor. It depends on Zn(2+) as a cofactor. Ca(2+) is required as a cofactor. Post-translationally, N-glycosylated.

It localises to the cell membrane. The protein localises to the extracellular vesicle membrane. It is found in the mitochondrion membrane. The protein resides in the mitochondrion intermembrane space. The enzyme catalyses a phosphate monoester + H2O = an alcohol + phosphate. The catalysed reaction is diphosphate + H2O = 2 phosphate + H(+). It catalyses the reaction pyridoxal 5'-phosphate + H2O = pyridoxal + phosphate. It carries out the reaction phosphoethanolamine + H2O = ethanolamine + phosphate. The enzyme catalyses N-phosphocreatine + H2O = creatine + phosphate. The catalysed reaction is ATP + H2O = ADP + phosphate + H(+). It catalyses the reaction ADP + H2O = AMP + phosphate + H(+). It carries out the reaction AMP + H2O = adenosine + phosphate. Phosphatase activity is specifically inhibited by 5-((5-chloro-2-methoxyphenyl)sulfonamido)nicotinamide (SBI-425). Its function is as follows. Alkaline phosphatase that metabolizes various phosphate compounds and plays a key role in skeletal mineralization and adaptive thermogenesis. Has broad substrate specificity and can hydrolyze a considerable variety of compounds: however, only a few substrates, such as diphosphate (inorganic pyrophosphate; PPi), pyridoxal 5'-phosphate (PLP) and N-phosphocreatine are natural substrates. Plays an essential role in skeletal and dental mineralization via its ability to hydrolyze extracellular diphosphate, a potent mineralization inhibitor, to phosphate: it thereby promotes hydroxyapatite crystal formation and increases inorganic phosphate concentration. Acts in a non-redundant manner with PHOSPHO1 in skeletal mineralization: while PHOSPHO1 mediates the initiation of hydroxyapatite crystallization in the matrix vesicles (MVs), ALPL/TNAP catalyzes the spread of hydroxyapatite crystallization in the extracellular matrix. Also promotes dephosphorylation of osteopontin (SSP1), an inhibitor of hydroxyapatite crystallization in its phosphorylated state; it is however unclear whether ALPL/TNAP mediates SSP1 dephosphorylation via a direct or indirect manner. Catalyzes dephosphorylation of PLP to pyridoxal (PL), the transportable form of vitamin B6, in order to provide a sufficient amount of PLP in the brain, an essential cofactor for enzymes catalyzing the synthesis of diverse neurotransmitters. Additionally, also able to mediate ATP degradation in a stepwise manner to adenosine, thereby regulating the availability of ligands for purinergic receptors. Also capable of dephosphorylating microbial products, such as lipopolysaccharides (LPS) as well as other phosphorylated small-molecules, such as poly-inosine:cytosine (poly I:C). Acts as a key regulator of adaptive thermogenesis as part of the futile creatine cycle: localizes to the mitochondria of thermogenic fat cells and acts by mediating hydrolysis of N-phosphocreatine to initiate a futile cycle of creatine dephosphorylation and phosphorylation. During the futile creatine cycle, creatine and N-phosphocreatine are in a futile cycle, which dissipates the high energy charge of N-phosphocreatine as heat without performing any mechanical or chemical work. This is Alkaline phosphatase, tissue-nonspecific isozyme (Alpl) from Rattus norvegicus (Rat).